Reading from the N-terminus, the 1154-residue chain is Paired amphipathic helix protein pst3 (1154 aa).

Disordered stretches follow at residues 1–71 and 91–110; these read MDVM…RSVT and SGKDGSISSQNAEGLSSSSN. A compositionally biased stretch (basic and acidic residues) spans 9–27; that stretch reads DSERDNPGDKVETQSDKNH. 2 stretches are compositionally biased toward polar residues: residues 32 to 45 and 100 to 110; these read SPSQSQSPVNTSLH and QNAEGLSSSSN. The region spanning 111–181 is the PAH 1 domain; the sequence is RPLDVNDALS…EGFNTFLPSG (71 aa). Disordered stretches follow at residues 199–249 and 321–376; these read GTPM…STEN and DNVD…KTSR. Over residues 228–241 the composition is skewed to low complexity; sequence STSPTDSQPQPSAP. The 71-residue stretch at 252–322 folds into the PAH 2 domain; sequence PRVDFNYAIA…EEFKLFLPDN (71 aa). Polar residues-rich tracts occupy residues 323 to 337 and 365 to 376; these read VDSTEPSTPNVQKSP and AQISRSISKTSR. A PAH 3 domain is found at 403–472; sequence SPYAATQEEL…LWFSEFIRWS (70 aa). Positions 797-824 are disordered; the sequence is NSNNTNVSFQTDETQTEDETMSDIHPDD.

The protein resides in the nucleus. This is Paired amphipathic helix protein pst3 (pst3) from Schizosaccharomyces pombe (strain 972 / ATCC 24843) (Fission yeast).